The primary structure comprises 239 residues: uncharacterized protein (239 aa).

4 helical membrane passes run 9 to 29 (LAIY…SQII), 65 to 85 (IIYL…YLFI), 94 to 114 (IILI…TFVV), and 167 to 187 (IYFA…MHWI).

The protein localises to the cell membrane. This is an uncharacterized protein from Methanocaldococcus jannaschii (strain ATCC 43067 / DSM 2661 / JAL-1 / JCM 10045 / NBRC 100440) (Methanococcus jannaschii).